The sequence spans 465 residues: Sperm microtubule associated protein 2-like (465 aa).

The span at 1 to 29 (MENQEFLSSSAPSEVTDGQVSTEISTCSE) shows a compositional bias: polar residues. The disordered stretch occupies residues 1 to 140 (MENQEFLSSS…REAKETELLP (140 aa)). Composition is skewed to basic and acidic residues over residues 40-70 (LDTH…QDQR) and 114-137 (KARE…KETE). 8 THEG repeats span residues 174–192 (RKCF…PKKQ), 214–233 (GALK…PKEV), 260–279 (PALF…PNGF), 297–316 (SLRI…AKGT), 333–352 (STLS…PRIK), 373–392 (AAMI…SKSV), 409–428 (ATTH…PNKR), and 446–465 (AALK…PLTR).

The protein is Sperm microtubule associated protein 2-like of Homo sapiens (Human).